We begin with the raw amino-acid sequence, 618 residues long: Proline--tRNA ligase (618 aa).

This sequence belongs to the class-II aminoacyl-tRNA synthetase family. ProS type 1 subfamily. In terms of assembly, homodimer.

It localises to the cytoplasm. The catalysed reaction is tRNA(Pro) + L-proline + ATP = L-prolyl-tRNA(Pro) + AMP + diphosphate. Functionally, catalyzes the attachment of proline to tRNA(Pro) in a two-step reaction: proline is first activated by ATP to form Pro-AMP and then transferred to the acceptor end of tRNA(Pro). As ProRS can inadvertently accommodate and process non-cognate amino acids such as alanine and cysteine, to avoid such errors it has two additional distinct editing activities against alanine. One activity is designated as 'pretransfer' editing and involves the tRNA(Pro)-independent hydrolysis of activated Ala-AMP. The other activity is designated 'posttransfer' editing and involves deacylation of mischarged Ala-tRNA(Pro). The misacylated Cys-tRNA(Pro) is not edited by ProRS. In Streptococcus pyogenes serotype M2 (strain MGAS10270), this protein is Proline--tRNA ligase.